Reading from the N-terminus, the 146-residue chain is UPF0742 protein C1348.03 (146 aa).

A helical membrane pass occupies residues 38–60 (LTVKYCLAVKLLIYLLYCWYIYS).

The protein belongs to the UPF0742 family.

It localises to the cytoplasm. Its subcellular location is the nucleus membrane. This Schizosaccharomyces pombe (strain 972 / ATCC 24843) (Fission yeast) protein is UPF0742 protein C1348.03.